The chain runs to 245 residues: Galectin-3 (245 aa).

Residues 1–30 are disordered; it reads MADGFSLNDALAGSGNPNPQGWPGAWGNQP. The residue at position 2 (Ala2) is an N-acetylalanine. Ser6 carries the post-translational modification Phosphoserine; by CK1. Repeat copies occupy residues 35–43, 44–52, 53–61, and 62–70. The 7 X 9 AA tandem repeats of Y-P-G-X(3)-P-[GS]-A stretch occupies residues 35–99; the sequence is YPGASYPGAY…PSAPGAYPAA (65 aa). Positions 47 to 68 are disordered; sequence QAPPGAYPGQAPPGAYPGPTAP. A 5; approximate repeat occupies 71–78; the sequence is YPGPAPGA. One copy of the 6; approximate repeat lies at 79–88; it reads YPGQPGASGA. The stretch at 89–99 is one 7; approximate repeat; that stretch reads YPSAPGAYPAA. Positions 113-243 constitute a Galectin domain; that stretch reads YKLPLAGGVM…DITLTSAAPT (131 aa). 176 to 182 is an a beta-D-galactoside binding site; sequence WGREERQ. Phosphoserine is present on Ser183. Positions 221 to 236 match the Nuclear export signal motif; sequence KNLREINQMEISGDIT.

Probably forms homo- or heterodimers. Interacts with DMBT1. Interacts with CD6 and ALCAM. Forms a complex with the ITGA3, ITGB1 and CSPG4. Interacts with LGALS3BP, LYPD3, ZFTRAF1 and UACA. Interacts with TRIM16; this interaction mediates autophagy of damage endomembranes. Interacts with cargo receptor TMED10; the interaction mediates the translocation from the cytoplasm into the ERGIC (endoplasmic reticulum-Golgi intermediate compartment) and thereby secretion. Interacts with and inhibits by binding NCR3/NKp30.

It is found in the cytoplasm. The protein localises to the nucleus. The protein resides in the secreted. Galactose-specific lectin which binds IgE. May mediate with the alpha-3, beta-1 integrin the stimulation by CSPG4 of endothelial cells migration. Together with DMBT1, required for terminal differentiation of columnar epithelial cells during early embryogenesis. In the nucleus: acts as a pre-mRNA splicing factor. Involved in acute inflammatory responses including neutrophil activation and adhesion, chemoattraction of monocytes macrophages, opsonization of apoptotic neutrophils, and activation of mast cells. Together with TRIM16, coordinates the recognition of membrane damage with mobilization of the core autophagy regulators ATG16L1 and BECN1 in response to damaged endomembranes. When secreted, interacts with NK cell-activating receptor NCR3/NKp30 acting as an inhibitory ligand which antagonizes NK cell attack. The sequence is that of Galectin-3 (LGALS3) from Cricetulus longicaudatus (Long-tailed dwarf hamster).